The following is a 63-amino-acid chain: Sperm protamine P1 (63 aa).

The interval 1 to 63 (MARYRRHSRS…RYSRRGRRRY (63 aa)) is disordered.

It belongs to the protamine P1 family. As to expression, testis.

The protein localises to the nucleus. Its subcellular location is the chromosome. Protamines substitute for histones in the chromatin of sperm during the haploid phase of spermatogenesis. They compact sperm DNA into a highly condensed, stable and inactive complex. The sequence is that of Sperm protamine P1 (PRM1) from Sminthopsis griseoventer (Gray-bellied dunnart).